The following is a 689-amino-acid chain: tRNA 5-methylaminomethyl-2-thiouridine biosynthesis bifunctional protein MnmC (689 aa).

The interval 1–245 (MNQRPIQTAT…KREMLTGTLP (245 aa)) is tRNA (mnm(5)s(2)U34)-methyltransferase. Residues 270–689 (IGGGIVSALT…RSPATQESSR (420 aa)) are FAD-dependent cmnm(5)s(2)U34 oxidoreductase.

This sequence in the N-terminal section; belongs to the methyltransferase superfamily. tRNA (mnm(5)s(2)U34)-methyltransferase family. The protein in the C-terminal section; belongs to the DAO family. Requires FAD as cofactor.

Its subcellular location is the cytoplasm. It carries out the reaction 5-aminomethyl-2-thiouridine(34) in tRNA + S-adenosyl-L-methionine = 5-methylaminomethyl-2-thiouridine(34) in tRNA + S-adenosyl-L-homocysteine + H(+). Functionally, catalyzes the last two steps in the biosynthesis of 5-methylaminomethyl-2-thiouridine (mnm(5)s(2)U) at the wobble position (U34) in tRNA. Catalyzes the FAD-dependent demodification of cmnm(5)s(2)U34 to nm(5)s(2)U34, followed by the transfer of a methyl group from S-adenosyl-L-methionine to nm(5)s(2)U34, to form mnm(5)s(2)U34. This chain is tRNA 5-methylaminomethyl-2-thiouridine biosynthesis bifunctional protein MnmC, found in Yersinia pestis.